A 317-amino-acid polypeptide reads, in one-letter code: Vacuolar arginine/histidine antiporter YPQ2 (317 aa).

Residues 1-13 are Vacuolar-facing; it reads MSCSNGIWPTVSN. The PQ-loop 1 domain occupies 8-71; sequence WPTVSNLCGS…AKLTGQLLFQ (64 aa). A helical membrane pass occupies residues 14-34; sequence LCGSLSFFTSVISLFPQIIET. Topologically, residues 35–39 are cytoplasmic; the sequence is YRDKS. The chain crosses the membrane as a helical span at residues 40–62; sequence VDGLSPYFLLAWLCGDITSLIGA. Residues 63–71 lie on the Vacuolar side of the membrane; the sequence is KLTGQLLFQ. The chain crosses the membrane as a helical span at residues 72–94; the sequence is ILLAIYFLLNDSFVCGQYYYYGV. The Cytoplasmic segment spans residues 95 to 143; the sequence is LHENKLATVGHEPKPLLPELVENGELLREEEDMIQGGSSAESPRSSRRR. Ser-136 carries the phosphoserine modification. The helical transmembrane segment at 144 to 164 threads the bilayer; it reads SAITAALAIAHTISTASAYPL. Over 165–184 the chain is Vacuolar; it reads NVGSTQSQVGPPGDGKNSQL. Residues 185–205 traverse the membrane as a helical segment; sequence GTILSWIGASFYVGARIPQLI. The 63-residue stretch at 185 to 247 folds into the PQ-loop 2 domain; the sequence is GTILSWIGAS…SCRFLDNQNK (63 aa). Topologically, residues 206–215 are cytoplasmic; sequence KNYNRKSTDG. A helical transmembrane segment spans residues 216-236; sequence LSPFLFATTLLCNITYNLSIF. At 237 to 249 the chain is on the vacuolar side; the sequence is TSCRFLDNQNKRE. Residues 250–270 traverse the membrane as a helical segment; that stretch reads FIVNELPFIFGSAGTIAFDLI. At 271-317 the chain is on the cytoplasmic side; it reads YFYQYYILYATDMQLRELERELYSPEEDSAAQLVTERTSLLSGETQT.

It belongs to the laat-1 family.

The protein resides in the vacuole membrane. The catalysed reaction is L-histidine(out) + L-arginine(in) = L-histidine(in) + L-arginine(out). Amino acid transporter that moves arginine across the vacuolar membrane. Active during nitrogen starvation when it exports stored vacuolar arginine to the cytosol, for use as a nitrogen source. Has been shown to function as an arginine/histidine antiporter when substrate is present on both sides of the membrane, but may also function as a uniporter. The sequence is that of Vacuolar arginine/histidine antiporter YPQ2 (YPQ2) from Saccharomyces cerevisiae (strain ATCC 204508 / S288c) (Baker's yeast).